A 133-amino-acid polypeptide reads, in one-letter code: ATP synthase epsilon chain, chloroplastic (133 aa).

This sequence belongs to the ATPase epsilon chain family. In terms of assembly, F-type ATPases have 2 components, CF(1) - the catalytic core - and CF(0) - the membrane proton channel. CF(1) has five subunits: alpha(3), beta(3), gamma(1), delta(1), epsilon(1). CF(0) has three main subunits: a, b and c.

The protein localises to the plastid. It localises to the chloroplast thylakoid membrane. Produces ATP from ADP in the presence of a proton gradient across the membrane. This is ATP synthase epsilon chain, chloroplastic from Morus indica (Mulberry).